A 147-amino-acid polypeptide reads, in one-letter code: Small ribosomal subunit protein uS5 (147 aa).

The region spanning 9–72 is the S5 DRBM domain; sequence FEEVIVDIGR…DDAFKNIVEV (64 aa).

The protein belongs to the universal ribosomal protein uS5 family. In terms of assembly, part of the 30S ribosomal subunit. Contacts proteins S4 and S8.

With S4 and S12 plays an important role in translational accuracy. In terms of biological role, located at the back of the 30S subunit body where it stabilizes the conformation of the head with respect to the body. This chain is Small ribosomal subunit protein uS5, found in Campylobacter jejuni subsp. jejuni serotype O:6 (strain 81116 / NCTC 11828).